The following is a 376-amino-acid chain: N-acetyldiaminopimelate deacetylase (376 aa).

Asp69 is a catalytic residue. Glu128 acts as the Proton acceptor in catalysis.

Belongs to the peptidase M20A family. N-acetyldiaminopimelate deacetylase subfamily.

It catalyses the reaction N-acetyl-(2S,6S)-2,6-diaminopimelate + H2O = (2S,6S)-2,6-diaminopimelate + acetate. Its pathway is amino-acid biosynthesis; L-lysine biosynthesis via DAP pathway; LL-2,6-diaminopimelate from (S)-tetrahydrodipicolinate (acetylase route): step 3/3. In terms of biological role, catalyzes the conversion of N-acetyl-diaminopimelate to diaminopimelate and acetate. The polypeptide is N-acetyldiaminopimelate deacetylase (Bacillus anthracis (strain A0248)).